A 191-amino-acid chain; its full sequence is Small ribosomal subunit protein uS5 (191 aa).

Residues Phe21 to Val84 enclose the S5 DRBM domain. The interval Leu155 to Ala191 is disordered. Positions Ala181–Ala191 are enriched in low complexity.

It belongs to the universal ribosomal protein uS5 family. Part of the 30S ribosomal subunit. Contacts proteins S4 and S8.

Its function is as follows. With S4 and S12 plays an important role in translational accuracy. In terms of biological role, located at the back of the 30S subunit body where it stabilizes the conformation of the head with respect to the body. This chain is Small ribosomal subunit protein uS5, found in Roseobacter denitrificans (strain ATCC 33942 / OCh 114) (Erythrobacter sp. (strain OCh 114)).